Consider the following 411-residue polypeptide: uncharacterized protein (411 aa).

The segment at 32–108 is disordered; that stretch reads LGGDPAPKPT…PEHPRRIPIP (77 aa).

This is an uncharacterized protein from Ictalurid herpesvirus 1 (strain Auburn) (IcHV-1).